The following is a 255-amino-acid chain: Sorbose reductase sou1 (255 aa).

Residues Ile-21 and Asn-95 each coordinate NADP(+). Residues Ser-148 and Tyr-163 each act as proton donor in the active site. NADP(+)-binding residues include Tyr-163, Lys-167, Ile-195, and Thr-197. Lys-167 functions as the Lowers pKa of active site Tyr in the catalytic mechanism.

It belongs to the short-chain dehydrogenases/reductases (SDR) family.

The catalysed reaction is D-sorbitol + NADP(+) = keto-L-sorbose + NADPH + H(+). Catalyzes the NADP dependent reduction of L-sorbose to D-glucitol. This chain is Sorbose reductase sou1 (sou1), found in Schizosaccharomyces pombe (strain 972 / ATCC 24843) (Fission yeast).